Here is a 230-residue protein sequence, read N- to C-terminus: NAD(P)H-hydrate epimerase (230 aa).

Residues 11-218 (AIAVDQELFN…ALQRKYELNL (208 aa)) enclose the YjeF N-terminal domain. 61–65 (NNGGD) is a (6S)-NADPHX binding site. Residues N62 and D126 each contribute to the K(+) site. (6S)-NADPHX is bound by residues 130–136 (GFSFKPP) and D159. S162 contacts K(+).

It belongs to the NnrE/AIBP family. It depends on K(+) as a cofactor.

It catalyses the reaction (6R)-NADHX = (6S)-NADHX. The enzyme catalyses (6R)-NADPHX = (6S)-NADPHX. In terms of biological role, catalyzes the epimerization of the S- and R-forms of NAD(P)HX, a damaged form of NAD(P)H that is a result of enzymatic or heat-dependent hydration. This is a prerequisite for the S-specific NAD(P)H-hydrate dehydratase to allow the repair of both epimers of NAD(P)HX. This chain is NAD(P)H-hydrate epimerase, found in Drosophila sechellia (Fruit fly).